The chain runs to 439 residues: 26S proteasome regulatory subunit 6A (439 aa).

Methionine 1 carries the N-acetylmethionine modification. Serine 9 carries the post-translational modification Phosphoserine. Position 227–234 (227–234 (GPPGTGKT)) interacts with ATP. At serine 376 the chain carries Phosphoserine.

Belongs to the AAA ATPase family. In terms of assembly, component of the 19S proteasome regulatory particle complex. The 26S proteasome consists of a 20S core particle (CP) and two 19S regulatory subunits (RP). The regulatory particle is made of a lid composed of 9 subunits, a base containing 6 ATPases including PSMC3 and few additional components. Interacts with PAAF1.

Its subcellular location is the cytoplasm. It is found in the nucleus. Functionally, component of the 26S proteasome, a multiprotein complex involved in the ATP-dependent degradation of ubiquitinated proteins. This complex plays a key role in the maintenance of protein homeostasis by removing misfolded or damaged proteins, which could impair cellular functions, and by removing proteins whose functions are no longer required. Therefore, the proteasome participates in numerous cellular processes, including cell cycle progression, apoptosis, or DNA damage repair. PSMC3 belongs to the heterohexameric ring of AAA (ATPases associated with diverse cellular activities) proteins that unfolds ubiquitinated target proteins that are concurrently translocated into a proteolytic chamber and degraded into peptides. The polypeptide is 26S proteasome regulatory subunit 6A (Psmc3) (Rattus norvegicus (Rat)).